Consider the following 206-residue polypeptide: Small ribosomal subunit protein uS4 (206 aa).

One can recognise an S4 RNA-binding domain in the interval 96-156 (RRLDNVVYRM…DKSKNQSRIK (61 aa)).

It belongs to the universal ribosomal protein uS4 family. As to quaternary structure, part of the 30S ribosomal subunit. Contacts protein S5. The interaction surface between S4 and S5 is involved in control of translational fidelity.

In terms of biological role, one of the primary rRNA binding proteins, it binds directly to 16S rRNA where it nucleates assembly of the body of the 30S subunit. Functionally, with S5 and S12 plays an important role in translational accuracy. The polypeptide is Small ribosomal subunit protein uS4 (Buchnera aphidicola subsp. Schizaphis graminum (strain Sg)).